The primary structure comprises 604 residues: ERAD-associated E3 ubiquitin-protein ligase component HRD3B (604 aa).

The N-terminal stretch at 1 to 25 (MRVSGQSIIAISLFTLSLYIHRVQA) is a signal peptide. The segment at 48–69 (ESSDFDEFGESEPKSEEELDPG) is disordered. Residues asparagine 78 and asparagine 105 are each glycosylated (N-linked (GlcNAc...) asparagine). Sel1-like repeat units lie at residues 125–160 (PHAQ…AGGN), 244–274 (VAMH…FSKA), 279–307 (LGYL…AANN), 311–344 (SGHY…ANAG), 346–380 (PKAF…AERG), 464–492 (AALL…YMYA), and 498–528 (AQAM…YDQA). An N-linked (GlcNAc...) asparagine glycan is attached at asparagine 293.

It belongs to the sel-1 family.

Its function is as follows. May be involved in the endoplasmic reticulum (ER) quality control system called ER-associated degradation (ERAD). In Arabidopsis thaliana (Mouse-ear cress), this protein is ERAD-associated E3 ubiquitin-protein ligase component HRD3B.